The primary structure comprises 222 residues: Triosephosphate isomerase (222 aa).

9-11 is a binding site for substrate; the sequence is NYK. His-93 serves as the catalytic Electrophile. Catalysis depends on Glu-141, which acts as the Proton acceptor. Residues Ile-146, Gly-181, and 202–203 contribute to the substrate site; that span reads AS.

It belongs to the triosephosphate isomerase family. Homotetramer; dimer of dimers.

The protein resides in the cytoplasm. It catalyses the reaction D-glyceraldehyde 3-phosphate = dihydroxyacetone phosphate. The protein operates within carbohydrate biosynthesis; gluconeogenesis. Its pathway is carbohydrate degradation; glycolysis; D-glyceraldehyde 3-phosphate from glycerone phosphate: step 1/1. Involved in the gluconeogenesis. Catalyzes stereospecifically the conversion of dihydroxyacetone phosphate (DHAP) to D-glyceraldehyde-3-phosphate (G3P). This is Triosephosphate isomerase from Methanosarcina barkeri (strain Fusaro / DSM 804).